The primary structure comprises 256 residues: Large ribosomal subunit protein eL8y (256 aa).

The span at Met-1 to Pro-15 shows a compositional bias: basic residues. The segment at Met-1–Asn-20 is disordered.

Belongs to the eukaryotic ribosomal protein eL8 family.

This is Large ribosomal subunit protein eL8y (RPL7AB) from Arabidopsis thaliana (Mouse-ear cress).